A 435-amino-acid chain; its full sequence is Methionine aminopeptidase 2 (435 aa).

Residues 57 to 77 (AIDGDQAAAKKKKSKKKKKKA) are disordered. Basic residues predominate over residues 65–77 (AKKKKSKKKKKKA). His188 contributes to the substrate binding site. A divalent metal cation-binding residues include Asp208, Asp219, and His288. His296 lines the substrate pocket. The a divalent metal cation site is built by Glu321 and Glu416.

This sequence belongs to the peptidase M24A family. Methionine aminopeptidase eukaryotic type 2 subfamily. It depends on Co(2+) as a cofactor. The cofactor is Zn(2+). Mn(2+) serves as cofactor. Requires Fe(2+) as cofactor.

It is found in the cytoplasm. It catalyses the reaction Release of N-terminal amino acids, preferentially methionine, from peptides and arylamides.. Cotranslationally removes the N-terminal methionine from nascent proteins. The N-terminal methionine is often cleaved when the second residue in the primary sequence is small and uncharged (Met-Ala-, Cys, Gly, Pro, Ser, Thr, or Val). This Clavispora lusitaniae (strain ATCC 42720) (Yeast) protein is Methionine aminopeptidase 2.